We begin with the raw amino-acid sequence, 1418 residues long: Chromatin remodeling factor mit1 (1418 aa).

Over residues 135-148 (DETASDSATSSSSD) the composition is skewed to low complexity. The interval 135-156 (DETASDSATSSSSDTNKKVNRK) is disordered. The PHD-type zinc finger occupies 212–271 (VCVCVKCHGREHRSSGKNFVYCDHCSNVYHYDCSPLPSLNKETRNYSQQNGFICPLCSKN). An RING-type; atypical zinc finger spans residues 215 to 269 (CVKCHGREHRSSGKNFVYCDHCSNVYHYDCSPLPSLNKETRNYSQQNGFICPLCS). The Helicase ATP-binding domain maps to 568 to 738 (YLRWYTHHPC…FNLLQFLNPM (171 aa)). 581 to 588 (DEMGLGKT) contacts ATP. The 160-residue stretch at 875–1034 (ILRLLVPKLI…QNHNSEKDLE (160 aa)) folds into the Helicase C-terminal domain.

It belongs to the SNF2/RAD54 helicase family. In terms of assembly, interacts with clr3.

The protein localises to the nucleus. It is found in the chromosome. It localises to the centromere. Its subcellular location is the telomere. Its function is as follows. Required for proper positioning of nucleosomes at heterochromatic loci and for transcriptional gene silencing (TGS) function of the Snf2/Hdac-containing repressor complex (SHREC). The chain is Chromatin remodeling factor mit1 (mit1) from Schizosaccharomyces pombe (strain 972 / ATCC 24843) (Fission yeast).